The primary structure comprises 299 residues: Transcription elongation factor A protein 2 (299 aa).

In terms of domain architecture, TFIIS N-terminal spans 5 to 82 (EEIARIARRL…KSWKKLLDVS (78 aa)). Residue Lys-57 forms a Glycyl lysine isopeptide (Lys-Gly) (interchain with G-Cter in ubiquitin) linkage. Residues Ser-59 and Ser-100 each carry the phosphoserine modification. The segment at 82-127 (SDGKSRNQGRGTPLPTSSSKDASRTTDLSCKKPDPPRTPSTPRITT) is disordered. Residues 87 to 101 (RNQGRGTPLPTSSSK) are compositionally biased toward polar residues. Positions 102–116 (DASRTTDLSCKKPDP) are enriched in basic and acidic residues. The region spanning 138–254 (VRNKCREMLT…EHQMARTGGT (117 aa)) is the TFIIS central domain. The TFIIS-type zinc-finger motif lies at 257–297 (DLFTCNKCRKKNCTYTQVQTRSSDEPMTTYVVCNECGNRWK). Residues Cys-261, Cys-264, Cys-289, and Cys-292 each coordinate Zn(2+).

Belongs to the TFS-II family. In terms of assembly, interacts with the basal transcription factor GTF2B. Interacts with REXO1. In terms of tissue distribution, testis and ovary specific. Specific to testicular germ cells.

It localises to the nucleus. Necessary for efficient RNA polymerase II transcription elongation past template-encoded arresting sites. The arresting sites in DNA have the property of trapping a certain fraction of elongating RNA polymerases that pass through, resulting in locked ternary complexes. Cleavage of the nascent transcript by S-II allows the resumption of elongation from the new 3'-terminus. This chain is Transcription elongation factor A protein 2 (Tcea2), found in Mus musculus (Mouse).